We begin with the raw amino-acid sequence, 188 residues long: ATP synthase subunit b (188 aa).

A helical membrane pass occupies residues 5–25 (MLLIFMMIVMIASSAMAAEAE).

The protein belongs to the ATPase B chain family. In terms of assembly, F-type ATPases have 2 components, F(1) - the catalytic core - and F(0) - the membrane proton channel. F(1) has five subunits: alpha(3), beta(3), gamma(1), delta(1), epsilon(1). F(0) has three main subunits: a(1), b(2) and c(10-14). The alpha and beta chains form an alternating ring which encloses part of the gamma chain. F(1) is attached to F(0) by a central stalk formed by the gamma and epsilon chains, while a peripheral stalk is formed by the delta and b chains.

The protein localises to the cell inner membrane. In terms of biological role, f(1)F(0) ATP synthase produces ATP from ADP in the presence of a proton or sodium gradient. F-type ATPases consist of two structural domains, F(1) containing the extramembraneous catalytic core and F(0) containing the membrane proton channel, linked together by a central stalk and a peripheral stalk. During catalysis, ATP synthesis in the catalytic domain of F(1) is coupled via a rotary mechanism of the central stalk subunits to proton translocation. Functionally, component of the F(0) channel, it forms part of the peripheral stalk, linking F(1) to F(0). The chain is ATP synthase subunit b from Thermodesulfovibrio yellowstonii (strain ATCC 51303 / DSM 11347 / YP87).